A 251-amino-acid polypeptide reads, in one-letter code: Triosephosphate isomerase (251 aa).

9–11 (NWK) provides a ligand contact to substrate. The active-site Electrophile is histidine 95. The active-site Proton acceptor is glutamate 167. Substrate contacts are provided by residues glycine 173, serine 213, and 234–235 (GG).

This sequence belongs to the triosephosphate isomerase family. As to quaternary structure, homodimer.

It localises to the cytoplasm. The catalysed reaction is D-glyceraldehyde 3-phosphate = dihydroxyacetone phosphate. The protein operates within carbohydrate biosynthesis; gluconeogenesis. It participates in carbohydrate degradation; glycolysis; D-glyceraldehyde 3-phosphate from glycerone phosphate: step 1/1. In terms of biological role, involved in the gluconeogenesis. Catalyzes stereospecifically the conversion of dihydroxyacetone phosphate (DHAP) to D-glyceraldehyde-3-phosphate (G3P). This Geobacter metallireducens (strain ATCC 53774 / DSM 7210 / GS-15) protein is Triosephosphate isomerase.